An 880-amino-acid polypeptide reads, in one-letter code: Lon protease (880 aa).

Residues 1–37 (MADYNDKNYLLHMSGPDSDTGPGIENEDPRAVENPGH) are disordered. Residues 27–37 (EDPRAVENPGH) show a composition bias toward basic and acidic residues. Residues 57-251 (LPILPVRDVV…LVNTQLQREV (195 aa)) enclose the Lon N-terminal domain. 404 to 411 (GPPGVGKT) serves as a coordination point for ATP. The Lon proteolytic domain occupies 640-821 (KLMPGMALGL…DELLPLVFEG (182 aa)). Residues Ser727 and Lys770 contribute to the active site. A compositionally biased stretch (gly residues) spans 826 to 836 (GGVSGAGQAGD). Residues 826–880 (GGVSGAGQAGDKGGKSKAAAGKKDVVAARPAKPAAPARRRKDKTEDELPTAEAGA) form a disordered region. Residues 852-861 (AARPAKPAAP) are compositionally biased toward low complexity.

The protein belongs to the peptidase S16 family. Homohexamer. Organized in a ring with a central cavity.

It is found in the cytoplasm. It carries out the reaction Hydrolysis of proteins in presence of ATP.. Its function is as follows. ATP-dependent serine protease that mediates the selective degradation of mutant and abnormal proteins as well as certain short-lived regulatory proteins. Required for cellular homeostasis and for survival from DNA damage and developmental changes induced by stress. Degrades polypeptides processively to yield small peptide fragments that are 5 to 10 amino acids long. Binds to DNA in a double-stranded, site-specific manner. The polypeptide is Lon protease (Desulfovibrio desulfuricans (strain ATCC 27774 / DSM 6949 / MB)).